Here is a 486-residue protein sequence, read N- to C-terminus: Transcriptional adapter 2-beta (486 aa).

The segment at 4–59 adopts a ZZ-type zinc-finger fold; it reads LGKKYCVNCLADVTNLRIRCAECQDIELCPECFSAGAEIGNHRRWHGYQQVDGGRF. Residues C9, C12, C23, C26, C32, C35, H45, and H49 each contribute to the Zn(2+) site. The region spanning 65-118 is the SANT domain; sequence EAEGGWTSREEQSLLDAIEQYGFGNWEDMAAHVGASRTPQEVMDHYVSMYIHGN. 2 disordered regions span residues 237 to 291 and 343 to 377; these read KKDK…EKGQ and EYEA…TAGL. 2 stretches are compositionally biased toward gly residues: residues 247-262 and 367-377; these read GTVG…GSGS and SSGGGGGTAGL.

The protein localises to the nucleus. In terms of biological role, transcriptional coactivator. The chain is Transcriptional adapter 2-beta (tada2b) from Danio rerio (Zebrafish).